The primary structure comprises 577 residues: Cytidine monophosphate-N-acetylneuraminic acid hydroxylase (577 aa).

The propeptide occupies 1-4; that stretch reads MMDR. In terms of domain architecture, Rieske spans 14–112; sequence LSPAEVANLK…IEMDENNGLS (99 aa). Residues cysteine 54, histidine 56, cysteine 75, and histidine 78 each contribute to the [2Fe-2S] cluster site.

It belongs to the CMP-Neu5Ac hydroxylase family. [2Fe-2S] cluster is required as a cofactor. As to expression, expressed in all tissues tested, except in brain.

The protein resides in the cytoplasm. The protein localises to the endoplasmic reticulum. It catalyses the reaction CMP-N-acetyl-beta-neuraminate + 2 Fe(II)-[cytochrome b5] + O2 + 2 H(+) = CMP-N-glycoloyl-beta-neuraminate + 2 Fe(III)-[cytochrome b5] + H2O. The protein operates within amino-sugar metabolism; N-acetylneuraminate metabolism. Its function is as follows. Sialic acids are components of carbohydrate chains of glycoconjugates and are involved in cell-cell recognition and cell-pathogen interactions. Catalyzes the conversion of CMP-N-acetylneuraminic acid (CMP-Neu5Ac) into its hydroxylated derivative CMP-N-glycolylneuraminic acid (CMP-Neu5Gc), a sialic acid abundantly expressed at the surface of many cells. The sequence is that of Cytidine monophosphate-N-acetylneuraminic acid hydroxylase (Cmah) from Mus musculus (Mouse).